Consider the following 1372-residue polypeptide: DNA-directed RNA polymerase subunit beta' (1372 aa).

Residues Cys-69, Cys-71, Cys-84, and Cys-87 each coordinate Zn(2+). Residues Asp-460, Asp-462, and Asp-464 each contribute to the Mg(2+) site. Residues Cys-808, Cys-882, Cys-889, and Cys-892 each contribute to the Zn(2+) site.

This sequence belongs to the RNA polymerase beta' chain family. As to quaternary structure, the RNAP catalytic core consists of 2 alpha, 1 beta, 1 beta' and 1 omega subunit. When a sigma factor is associated with the core the holoenzyme is formed, which can initiate transcription. Mg(2+) serves as cofactor. The cofactor is Zn(2+).

It catalyses the reaction RNA(n) + a ribonucleoside 5'-triphosphate = RNA(n+1) + diphosphate. Functionally, DNA-dependent RNA polymerase catalyzes the transcription of DNA into RNA using the four ribonucleoside triphosphates as substrates. The protein is DNA-directed RNA polymerase subunit beta' of Rickettsia felis (strain ATCC VR-1525 / URRWXCal2) (Rickettsia azadi).